Consider the following 287-residue polypeptide: ATP synthase gamma chain (287 aa).

The protein belongs to the ATPase gamma chain family. In terms of assembly, F-type ATPases have 2 components, CF(1) - the catalytic core - and CF(0) - the membrane proton channel. CF(1) has five subunits: alpha(3), beta(3), gamma(1), delta(1), epsilon(1). CF(0) has three main subunits: a, b and c.

The protein localises to the cell inner membrane. In terms of biological role, produces ATP from ADP in the presence of a proton gradient across the membrane. The gamma chain is believed to be important in regulating ATPase activity and the flow of protons through the CF(0) complex. This chain is ATP synthase gamma chain, found in Parabacteroides distasonis (strain ATCC 8503 / DSM 20701 / CIP 104284 / JCM 5825 / NCTC 11152).